Here is a 553-residue protein sequence, read N- to C-terminus: Zinc finger protein with KRAB and SCAN domains 3 (553 aa).

The segment at 28–49 (EQEESSPLAEETSWLGSPGPDR) is disordered. Phosphoserine is present on residues serine 33 and serine 44. Residues 51–133 (RQRFRAFRYP…ALLEYLDRQL (83 aa)) form the SCAN box domain. Threonine 136 carries the phosphothreonine modification. A Glycyl lysine isopeptide (Lys-Gly) (interchain with G-Cter in SUMO2) cross-link involves residue lysine 176. Residue threonine 206 is modified to Phosphothreonine. The KRAB domain occupies 213-273 (LKMEDVAPVL…RAEEYRDQKP (61 aa)). Serine 223 is modified (phosphoserine). C2H2-type zinc fingers lie at residues 313–335 (FYCR…KRIH), 341–363 (YECE…QRVH), 369–391 (YECE…QRTH), 397–419 (YECD…HRIH), and 425–447 (YQCN…QRTH). Threonine 448 carries the post-translational modification Phosphothreonine. C2H2-type zinc fingers lie at residues 479-501 (YQCN…QKVH) and 507-529 (FECQ…QRRH).

The protein belongs to the krueppel C2H2-type zinc-finger protein family. As to expression, expressed in heart, brain, spleen, lung, liver, skeletal muscle, kidney and testis.

It localises to the nucleus. It is found in the cytoplasm. Its function is as follows. Transcriptional factor that binds to the consensus sequence 5'-[GT][AG][AGT]GGGG-3' and acts as a repressor of autophagy. Specifically represses expression of genes involved in autophagy and lysosome biogenesis/function such as MAP1LC3B, ULK1 or WIPI2. Associates with chromatin at the ITGB4 and VEGF promoters. This is Zinc finger protein with KRAB and SCAN domains 3 (Zkscan3) from Mus musculus (Mouse).